Consider the following 146-residue polypeptide: Large-conductance mechanosensitive channel (146 aa).

The next 2 helical transmembrane spans lie at 12–32 (AFAM…GGAF) and 88–108 (LQAT…IKLI).

This sequence belongs to the MscL family. In terms of assembly, homopentamer.

The protein resides in the cell inner membrane. Its function is as follows. Channel that opens in response to stretch forces in the membrane lipid bilayer. May participate in the regulation of osmotic pressure changes within the cell. In Bacteroides fragilis (strain ATCC 25285 / DSM 2151 / CCUG 4856 / JCM 11019 / LMG 10263 / NCTC 9343 / Onslow / VPI 2553 / EN-2), this protein is Large-conductance mechanosensitive channel.